A 168-amino-acid polypeptide reads, in one-letter code: Regulatory protein RecX (168 aa).

Belongs to the RecX family.

Its subcellular location is the cytoplasm. Functionally, modulates RecA activity. The chain is Regulatory protein RecX from Serratia proteamaculans (strain 568).